We begin with the raw amino-acid sequence, 586 residues long: Phosphomethylpyrimidine synthase (586 aa).

The tract at residues 1-59 is disordered; it reads MKQSVSAEQIELKSSLPGSKKVYVDGPREGMKVPMREIEQSDTNGVPNPPIRVYDTSGP. Residues 22–39 are compositionally biased toward basic and acidic residues; the sequence is VYVDGPREGMKVPMREIE. Residues Asn-193, Met-222, Tyr-251, His-287, 307-309, 348-351, and Glu-387 each bind substrate; these read SRG and DGLR. His-391 contributes to the Zn(2+) binding site. A substrate-binding site is contributed by Tyr-414. His-455 is a Zn(2+) binding site. 3 residues coordinate [4Fe-4S] cluster: Cys-535, Cys-538, and Cys-543.

The protein belongs to the ThiC family. Requires [4Fe-4S] cluster as cofactor.

The catalysed reaction is 5-amino-1-(5-phospho-beta-D-ribosyl)imidazole + S-adenosyl-L-methionine = 4-amino-2-methyl-5-(phosphooxymethyl)pyrimidine + CO + 5'-deoxyadenosine + formate + L-methionine + 3 H(+). The protein operates within cofactor biosynthesis; thiamine diphosphate biosynthesis. Catalyzes the synthesis of the hydroxymethylpyrimidine phosphate (HMP-P) moiety of thiamine from aminoimidazole ribotide (AIR) in a radical S-adenosyl-L-methionine (SAM)-dependent reaction. The protein is Phosphomethylpyrimidine synthase of Bacillus cereus (strain ATCC 10987 / NRS 248).